A 1032-amino-acid chain; its full sequence is Integrin alpha-4 (1032 aa).

An N-terminal signal peptide occupies residues 1–33 (MAWEARREPGPRRAAVRETVMLLLCLGVPTGRP). 7 FG-GAP repeats span residues 35 to 100 (NVDT…PGQT), 110 to 177 (NGEP…TELS), 185 to 237 (QDYV…KYKA), 238 to 291 (FLDK…EKEL), 292 to 351 (NILH…GAVM), 355 to 412 (ETNL…GISS), and 416 to 478 (QRIE…HPES). Residues 35 to 977 (NVDTESALLY…HHQRPKRYFT (943 aa)) lie on the Extracellular side of the membrane. Asparagine 79 is a glycosylation site (N-linked (GlcNAc...) asparagine). A disulfide bond links cysteine 91 and cysteine 101. N-linked (GlcNAc...) asparagine glycosylation is present at asparagine 138. Intrachain disulfides connect cysteine 144/cysteine 165 and cysteine 183/cysteine 198. N-linked (GlcNAc...) asparagine glycosylation occurs at asparagine 229. Residues aspartate 314, asparagine 316, aspartate 318, aspartate 322, aspartate 377, aspartate 379, aspartate 381, aspartate 385, aspartate 439, aspartate 441, asparagine 443, tyrosine 445, and aspartate 447 each coordinate Ca(2+). An N-linked (GlcNAc...) asparagine glycan is attached at asparagine 480. 2 disulfide bridges follow: cysteine 486/cysteine 495 and cysteine 501/cysteine 557. 2 N-linked (GlcNAc...) asparagine glycosylation sites follow: asparagine 518 and asparagine 538. The short motif at 606–616 (KKEKDIMKKTI) is the SG1 element. Residues cysteine 622 and cysteine 627 are joined by a disulfide bond. Asparagine 626, asparagine 645, and asparagine 660 each carry an N-linked (GlcNAc...) asparagine glycan. Cysteine 698 and cysteine 711 are oxidised to a cystine. N-linked (GlcNAc...) asparagine glycans are attached at residues asparagine 806 and asparagine 821. 2 disulfides stabilise this stretch: cysteine 852/cysteine 890 and cysteine 897/cysteine 902. The chain crosses the membrane as a helical span at residues 978-1001 (IVIISSSLLLGLIVLLLISYVMWK). The Cytoplasmic portion of the chain corresponds to 1002–1032 (AGFFKRQYKSILQEENRRDSWSYINSKSNDD). The GFFKR motif signature appears at 1003-1007 (GFFKR). At serine 1021 the chain carries Phosphoserine.

Belongs to the integrin alpha chain family. As to quaternary structure, heterodimer of an alpha and a beta subunit. The alpha subunit can sometimes be cleaved into two non-covalently associated fragments. Alpha-4 associates with either beta-1 or beta-7. Alpha-4 interacts with PXN, LPXN, and TGFB1I1/HIC5. Interacts with CSPG4 through CSPG4 chondroitin sulfate glycosaminoglycan. Interacts with JAML; integrin alpha-4/beta-1 may regulate leukocyte to endothelial cells adhesion by controlling JAML homodimerization. ITGA4:ITGB1 is found in a ternary complex with CX3CR1 and CX3CL1. Interacts with MDK. ITGA4:ITGB1 interacts with MDK; this interaction mediates MDK-induced osteoblast cells migration through PXN phosphorylation. Integrin ITGA4:ITGB1 interacts with SVEP1 (via Sushi domain 21); thereby inhibits Ca(2+) intracellular signaling and as a result represses vasocontraction. ITGA4:ITGB1 interacts with SELP. ITGA4:ITGB1 interacts with BCAM. Phosphorylation on Ser-1027 inhibits PXN binding. As to expression, expressed in vascular smooth muscle cells (at protein level).

The protein resides in the membrane. Integrins alpha-4/beta-1 (VLA-4) and alpha-4/beta-7 are receptors for fibronectin. They recognize one or more domains within the alternatively spliced CS-1 and CS-5 regions of fibronectin. They are also receptors for VCAM1. Integrin alpha-4/beta-1 recognizes the sequence Q-I-D-S in VCAM1. Integrin alpha-4/beta-7 is also a receptor for MADCAM1. It recognizes the sequence L-D-T in MADCAM1. On activated endothelial cells integrin VLA-4 triggers homotypic aggregation for most VLA-4-positive leukocyte cell lines. It may also participate in cytolytic T-cell interactions with target cells. ITGA4:ITGB1 binds to fractalkine (CX3CL1) and may act as its coreceptor in CX3CR1-dependent fractalkine signaling. ITGA4:ITGB1 binds to PLA2G2A via a site (site 2) which is distinct from the classical ligand-binding site (site 1) and this induces integrin conformational changes and enhanced ligand binding to site 1. Integrin ITGA4:ITGB1 represses PRKCA-mediated L-type voltage-gated channel Ca(2+) influx and ROCK-mediated calcium sensitivity in vascular smooth muscle cells via its interaction with SVEP1, thereby inhibiting vasocontraction. The chain is Integrin alpha-4 (ITGA4) from Homo sapiens (Human).